A 201-amino-acid polypeptide reads, in one-letter code: Protein GrpE (201 aa).

Belongs to the GrpE family. As to quaternary structure, homodimer.

It localises to the cytoplasm. Its function is as follows. Participates actively in the response to hyperosmotic and heat shock by preventing the aggregation of stress-denatured proteins, in association with DnaK and GrpE. It is the nucleotide exchange factor for DnaK and may function as a thermosensor. Unfolded proteins bind initially to DnaJ; upon interaction with the DnaJ-bound protein, DnaK hydrolyzes its bound ATP, resulting in the formation of a stable complex. GrpE releases ADP from DnaK; ATP binding to DnaK triggers the release of the substrate protein, thus completing the reaction cycle. Several rounds of ATP-dependent interactions between DnaJ, DnaK and GrpE are required for fully efficient folding. The polypeptide is Protein GrpE (Shewanella denitrificans (strain OS217 / ATCC BAA-1090 / DSM 15013)).